Consider the following 424-residue polypeptide: Adenylyltransferase and sulfurtransferase UBA4 (424 aa).

ATP is bound by residues glycine 76, aspartate 97, 104–108, lysine 121, and 165–166; these read TNLHR and DS. The Zn(2+) site is built by cysteine 206 and cysteine 209. Cysteine 223 serves as the catalytic Glycyl thioester intermediate; for adenylyltransferase activity. Cysteine 283 lines the Zn(2+) pocket. Residues 326 to 422 enclose the Rhodanese domain; sequence RNSDHVLLDV…WYSEVDQNIP (97 aa). Cysteine 382 acts as the Cysteine persulfide intermediate; for sulfurtransferase activity in catalysis.

The protein in the N-terminal section; belongs to the HesA/MoeB/ThiF family. UBA4 subfamily. It depends on Zn(2+) as a cofactor.

It is found in the cytoplasm. It localises to the cytosol. It functions in the pathway tRNA modification; 5-methoxycarbonylmethyl-2-thiouridine-tRNA biosynthesis. Functionally, plays a central role in 2-thiolation of mcm(5)S(2)U at tRNA wobble positions of cytosolic tRNA(Lys), tRNA(Glu) and tRNA(Gln). Acts by mediating the C-terminal thiocarboxylation of sulfur carrier URM1. Its N-terminus first activates URM1 as acyl-adenylate (-COAMP), then the persulfide sulfur on the catalytic cysteine is transferred to URM1 to form thiocarboxylation (-COSH) of its C-terminus. The reaction probably involves hydrogen sulfide that is generated from the persulfide intermediate and that acts as a nucleophile towards URM1. Subsequently, a transient disulfide bond is formed. Does not use thiosulfate as sulfur donor; NFS1 probably acting as a sulfur donor for thiocarboxylation reactions. Prior mcm(5) tRNA modification by the elongator complex is required for 2-thiolation. May also be involved in protein urmylation. This is Adenylyltransferase and sulfurtransferase UBA4 from Meyerozyma guilliermondii (strain ATCC 6260 / CBS 566 / DSM 6381 / JCM 1539 / NBRC 10279 / NRRL Y-324) (Yeast).